The following is a 248-amino-acid chain: Chromatin target of PRMT1 protein (248 aa).

A2 carries the N-acetylalanine modification. T33 is subject to Phosphothreonine. Phosphoserine occurs at positions 40, 49, and 64. K70 is covalently cross-linked (Glycyl lysine isopeptide (Lys-Gly) (interchain with G-Cter in SUMO2)). Positions 151-204 (LRRGGVRGRGGPGRGGLGRGAMGRGGIGGRGRGMIGRGRGGFGGRGRGRGRGRG) are disordered. Residues 153 to 206 (RGGVRGRGGPGRGGLGRGAMGRGGIGGRGRGMIGRGRGGFGGRGRGRGRGRGAL) are interaction with PRMT1. Positions 157–195 (RGRGGPGRGGLGRGAMGRGGIGGRGRGMIGRGRGGFGGR) are enriched in gly residues. Positions 194-203 (GRGRGRGRGR) match the GAR motif; involved in 5hmC binding motif. A Phosphothreonine modification is found at T242.

Interacts with PRMT1 and PRMT5. Interacts with the 5FMC complex; the interaction is methylation-dependent. Interacts with FYTTD1, SET and PRC1 complex members CBX4, RNF2 and PHC2; the interactions are methylation-independent. Interacts with ZNF148. Component of the transcription/export (TREX) complex at least composed of ALYREF/THOC4, DDX39B, SARNP/CIP29, CHTOP and the THO subcomplex; TREX seems to have dynamic structure involving ATP-dependent remodeling; in the complex interacts (methylated) with ALYREF/THOC4 and with DDX39B in a methylation-independent manner. Interacts (methylated) with NXF1; the interaction is mutually exclusive with the NXF1:THOC5 interaction. Interacts with WDR77 and ERH. In terms of processing, asymmetrically methylated by PRMT1. Symmetrically methylated by PRMT5. As to expression, expressed in an erythroid progenitor cell line derived from peripheral blood. Expressed in glioblastoma cells.

It localises to the nucleus. The protein resides in the nucleolus. It is found in the nucleoplasm. Its subcellular location is the nucleus speckle. Functionally, plays an important role in the ligand-dependent activation of estrogen receptor target genes. May play a role in the silencing of fetal globin genes. Recruits the 5FMC complex to ZNF148, leading to desumoylation of ZNF148 and subsequent transactivation of ZNF148 target genes. Plays an important role in the tumorigenicity of glioblastoma cells. Binds to 5-hydroxymethylcytosine (5hmC) and associates with the methylosome complex containing PRMT1, PRMT5, MEP50 and ERH. The CHTOP-methylosome complex associated with 5hmC is recruited to selective sites on the chromosome, where it methylates H4R3 and activates the transcription of genes involved in glioblastomagenesis. Its function is as follows. Required for effective mRNA nuclear export and is a component of the TREX complex which is thought to couple mRNA transcription, processing and nuclear export, and specifically associates with spliced mRNA and not with unspliced pre-mRNA. TREX is recruited to spliced mRNAs by a transcription-independent mechanism, binds to mRNA upstream of the exon-junction complex (EJC) and is recruited in a splicing- and cap-dependent manner to a region near the 5' end of the mRNA where it functions in mRNA export to the cytoplasm via the TAP/NFX1 pathway. The TREX complex is essential for the export of Kaposi's sarcoma-associated herpesvirus (KSHV) intronless mRNAs and infectious virus production. Stimulates DDX39B ATPase and helicase activities. In cooperation with ALYREF/THOC4 enhances NXF1 RNA binding activity. In Homo sapiens (Human), this protein is Chromatin target of PRMT1 protein (CHTOP).